The sequence spans 537 residues: MPKILEFDESARRALERGVNRLADAVKVTLGPKGRNVVIDKKWGAPTITNDGVTVAREVELEDPYENLGAQLVKEVATKTNDAAGDGTTTATVLAQALVNEGLRSVAAGASPILLKRGIDAAAQAVSETLLSRAREIDERGDIAYVATNSAQDKQIGELIAEAFDKVGKDGVITVEESQTFGMDLEFTEGLQFDKGYISPYFVTDPDRQEAVLEDALILIHQGKISNLAELLPLLEKIVQTKKPLLIIAEDVEGDALGALVLNKMRGTLSVAAVKAPGFGERRKAMLQDIAILTGGQVIAEEVGLTLENAELDVLGKARRITVTKDTTTIVDGAGDQSEVNDRINQIRKEIEATDSDWDREKLQERLAKLAGGVCVLRVGAATEVELKERKHRLEDAISATRAAVEEGIIAGGGSALVHAAKTLEGDLGRTGDEATGVAIVRRALVAPARWIANNAGAEGNVVVSRIAELEPGHGYNAATGEYGDLVAQGIIDPVKVTRSAVQNAASIAGMLLTTEALVVEKPEEEENAEGGHGHSH.

ATP is bound by residues 29 to 32 (TLGP), 86 to 90 (DGTTT), Gly413, 477 to 479 (NAA), and Asp493.

This sequence belongs to the chaperonin (HSP60) family. In terms of assembly, forms a cylinder of 14 subunits composed of two heptameric rings stacked back-to-back. Interacts with the co-chaperonin GroES.

The protein resides in the cytoplasm. The catalysed reaction is ATP + H2O + a folded polypeptide = ADP + phosphate + an unfolded polypeptide.. Together with its co-chaperonin GroES, plays an essential role in assisting protein folding. The GroEL-GroES system forms a nano-cage that allows encapsulation of the non-native substrate proteins and provides a physical environment optimized to promote and accelerate protein folding. In Thermobifida fusca (strain YX), this protein is Chaperonin GroEL 2.